Consider the following 317-residue polypeptide: Transcription factor MYB35 (317 aa).

HTH myb-type domains are found at residues 9-65 (KSNV…RPDL) and 66-116 (KHDS…KKKL). 2 consecutive DNA-binding regions (H-T-H motif) follow at residues 37–61 (WSLI…TNYL) and 89–112 (WSSI…NTKL).

Inflorescences-specific. Accumulates in anthers, especially in tapetum and meiocytes/microsporocytes and microspores during anther development.

It is found in the nucleus. In terms of biological role, required for anther development and early tapetal function during microspore maturation. Regulates callose dissolution required for microspores release from the tetrads. The sequence is that of Transcription factor MYB35 from Arabidopsis thaliana (Mouse-ear cress).